Consider the following 228-residue polypeptide: Isonitrile hydratase (228 aa).

The active site involves cysteine 101.

In terms of assembly, homodimer.

The enzyme catalyses N-cyclohexylformamide = cyclohexyl isocyanide + H2O. Its activity is regulated as follows. Sensitive to thiol reagents and oxidizing reagents, but is not influenced by chelators or reducing reagents. In terms of biological role, catalyzes the hydration of cyclohexyl isocyanide to N-cyclohexylformamide. Acts on various isonitriles, but not on nitriles or amides. Probably involved in detoxification. This Pseudomonas putida (Arthrobacter siderocapsulatus) protein is Isonitrile hydratase (inhA).